We begin with the raw amino-acid sequence, 299 residues long: MAEPRGIISAMLTPFTSDVGPVDYEWLPGYLRFLADGGLHGVLALGTTGEGPSMSVAERIRTLEIIMAHRGELSVIAGTGCAALTDTIALSRAAIDLGVDAILVMPPFYIKQPDETGILAYFRALCDALPADARVMLYHIPQVTGVPITRTIIDGLLASHGTQFYGLKDSSGDWEHSKMLIDSYPQLRIFTGSDRLIARALAGGAAGAITALSSAFPKLARAVFDAFHQGGDVAAAQARLSAVRDLVNPINTPPALKAALTWTSDLPETALRLPLLPLSNEEVAALRAAYERIMAGTTP.

Active-site charge relay system residues include threonine 47 and tyrosine 109. The active-site Proton donor is tyrosine 138. Lysine 168 (schiff-base intermediate with substrate) is an active-site residue.

It belongs to the DapA family. In terms of assembly, homotetramer.

It localises to the cytoplasm. This is an uncharacterized protein from Chloroflexus aurantiacus (strain ATCC 29366 / DSM 635 / J-10-fl).